The sequence spans 158 residues: Transcription elongation factor GreA (158 aa).

The protein belongs to the GreA/GreB family.

In terms of biological role, necessary for efficient RNA polymerase transcription elongation past template-encoded arresting sites. The arresting sites in DNA have the property of trapping a certain fraction of elongating RNA polymerases that pass through, resulting in locked ternary complexes. Cleavage of the nascent transcript by cleavage factors such as GreA or GreB allows the resumption of elongation from the new 3'terminus. GreA releases sequences of 2 to 3 nucleotides. In Rhizobium johnstonii (strain DSM 114642 / LMG 32736 / 3841) (Rhizobium leguminosarum bv. viciae), this protein is Transcription elongation factor GreA.